The following is a 459-amino-acid chain: MRASWVAARKGQANVSQLHFARQGVVTQEMDYVARRENLPESLVMEEVARGRMIIPANINHANLEPMAIGIASSCKVNANIGASPNASDVAEELKKLELAVKYGADTVMDLSTGGVNLDEVRTAIINASPVPIGTVPVYQALESVHGSIEKLDEDDFLHIIEKHCQQGVDYQTIHAGLLIEHLPLVKGRLTGIVSRGGGILAQWMLYHHRQNPLFTRFDDICEIFKRYDCSFSLGDSLRPGCQHDASDAAQLAELKTLGELTKRAWAHDVQVMVEGPGHVPMDQIEFNVRKQMEECNEAPFYVLGPLVTDIAPGYDHITSAIGAAMAGWYGTAMLCYVTPKEHLGLPNPEDVREGLIAYKIAAHAADIARHRPGARDRDDELSRARYNFDWNKQFELSLDPERAKQYHDETLPADIYKQAEFCSMCGPKHCPMQTKITDEDLEGLEKSLKSKGKAELPA.

Substrate contacts are provided by residues Asn-80, Met-109, Tyr-139, His-175, 195-197 (SRG), 236-239 (DSLR), and Glu-275. His-279 lines the Zn(2+) pocket. Tyr-302 is a substrate binding site. His-343 contacts Zn(2+). The [4Fe-4S] cluster site is built by Cys-423, Cys-426, and Cys-431.

Belongs to the ThiC family. [4Fe-4S] cluster is required as a cofactor.

The catalysed reaction is 5-amino-1-(5-phospho-beta-D-ribosyl)imidazole + S-adenosyl-L-methionine = 4-amino-2-methyl-5-(phosphooxymethyl)pyrimidine + CO + 5'-deoxyadenosine + formate + L-methionine + 3 H(+). Its pathway is cofactor biosynthesis; thiamine diphosphate biosynthesis. Its function is as follows. Catalyzes the synthesis of the hydroxymethylpyrimidine phosphate (HMP-P) moiety of thiamine from aminoimidazole ribotide (AIR) in a radical S-adenosyl-L-methionine (SAM)-dependent reaction. This Prochlorococcus marinus (strain MIT 9303) protein is Phosphomethylpyrimidine synthase.